Reading from the N-terminus, the 285-residue chain is Pantothenate synthetase (285 aa).

30–37 (MGNLHDGH) provides a ligand contact to ATP. Catalysis depends on histidine 37, which acts as the Proton donor. Glutamine 61 provides a ligand contact to (R)-pantoate. Residue glutamine 61 coordinates beta-alanine. 148–151 (GEKD) serves as a coordination point for ATP. Position 154 (glutamine 154) interacts with (R)-pantoate. 185–188 (RSSR) contributes to the ATP binding site.

This sequence belongs to the pantothenate synthetase family. As to quaternary structure, homodimer.

The protein localises to the cytoplasm. It carries out the reaction (R)-pantoate + beta-alanine + ATP = (R)-pantothenate + AMP + diphosphate + H(+). It participates in cofactor biosynthesis; (R)-pantothenate biosynthesis; (R)-pantothenate from (R)-pantoate and beta-alanine: step 1/1. Functionally, catalyzes the condensation of pantoate with beta-alanine in an ATP-dependent reaction via a pantoyl-adenylate intermediate. The chain is Pantothenate synthetase from Alcanivorax borkumensis (strain ATCC 700651 / DSM 11573 / NCIMB 13689 / SK2).